Here is a 446-residue protein sequence, read N- to C-terminus: Tubulin beta chain (446 aa).

Residues glutamine 11, glutamate 69, serine 138, glycine 142, threonine 143, glycine 144, asparagine 204, and asparagine 226 each coordinate GTP. Mg(2+) is bound at residue glutamate 69. Residues 427 to 446 (EAGVDEGEEFEEEEDFGDEQ) form a disordered region. A compositionally biased stretch (acidic residues) spans 429–446 (GVDEGEEFEEEEDFGDEQ).

The protein belongs to the tubulin family. As to quaternary structure, dimer of alpha and beta chains. A typical microtubule is a hollow water-filled tube with an outer diameter of 25 nm and an inner diameter of 15 nM. Alpha-beta heterodimers associate head-to-tail to form protofilaments running lengthwise along the microtubule wall with the beta-tubulin subunit facing the microtubule plus end conferring a structural polarity. Microtubules usually have 13 protofilaments but different protofilament numbers can be found in some organisms and specialized cells. The cofactor is Mg(2+).

The protein resides in the cytoplasm. It localises to the cytoskeleton. Tubulin is the major constituent of microtubules, a cylinder consisting of laterally associated linear protofilaments composed of alpha- and beta-tubulin heterodimers. Microtubules grow by the addition of GTP-tubulin dimers to the microtubule end, where a stabilizing cap forms. Below the cap, tubulin dimers are in GDP-bound state, owing to GTPase activity of alpha-tubulin. In Giardia intestinalis (Giardia lamblia), this protein is Tubulin beta chain.